We begin with the raw amino-acid sequence, 314 residues long: Olfactory receptor 5I1 (314 aa).

Residues 1–27 (MEFTDRNYTLVTEFILLGFPTRPELQI) are Extracellular-facing. Residue N7 is glycosylated (N-linked (GlcNAc...) asparagine). A helical membrane pass occupies residues 28-48 (VLFLMFLTLYAIILIGNIGLM). Residues 49–56 (LLIRIDPH) are Cytoplasmic-facing. Residues 57 to 77 (LQTPMYFFLSNLSFVDLCYFS) form a helical membrane-spanning segment. At 78–101 (DIVPKMLVNFLSENKSISYYGCAL) the chain is on the extracellular side. A disulfide bridge links C99 with C191. A helical membrane pass occupies residues 102 to 122 (QFYFFCTFADTESFILAAMAY). Topologically, residues 123 to 141 (DRYVAICNPLLYTVVMSRG) are cytoplasmic. A helical transmembrane segment spans residues 142-162 (ICMRLIVLSYLGGNMSSLVHT). Residues 163–198 (SFAFILKYCDKNVINHFFCDLPPLLKLSCTDTTINE) are Extracellular-facing. Residues 199-219 (WLLSTYGSSVEIICFIIIIIS) traverse the membrane as a helical segment. Residues 220 to 239 (YFFILLSVLKIRSFSGRKKT) are Cytoplasmic-facing. The helical transmembrane segment at 240–260 (FSTCASHLTSVTIYQGTLLFI) threads the bilayer. Residues 261–273 (YSRPSYLYSPNTD) are Extracellular-facing. A helical membrane pass occupies residues 274–294 (KIISVFYTIFIPVLNPLIYSL). At 295–314 (RNKDVKDAAEKVLRSKVDSS) the chain is on the cytoplasmic side.

This sequence belongs to the G-protein coupled receptor 1 family.

It localises to the cell membrane. Its function is as follows. Odorant receptor. The sequence is that of Olfactory receptor 5I1 (OR5I1) from Homo sapiens (Human).